We begin with the raw amino-acid sequence, 372 residues long: Chaperone protein DnaJ (372 aa).

In terms of domain architecture, J spans Asp5 to Gly70. The CR-type zinc finger occupies Gly127–Tyr205. Zn(2+) contacts are provided by Cys140, Cys143, Cys157, Cys160, Cys179, Cys182, Cys193, and Cys196. CXXCXGXG motif repeat units lie at residues Cys140–Gly147, Cys157–Gly164, Cys179–Gly186, and Cys193–Gly200.

This sequence belongs to the DnaJ family. Homodimer. It depends on Zn(2+) as a cofactor.

It is found in the cytoplasm. Participates actively in the response to hyperosmotic and heat shock by preventing the aggregation of stress-denatured proteins and by disaggregating proteins, also in an autonomous, DnaK-independent fashion. Unfolded proteins bind initially to DnaJ; upon interaction with the DnaJ-bound protein, DnaK hydrolyzes its bound ATP, resulting in the formation of a stable complex. GrpE releases ADP from DnaK; ATP binding to DnaK triggers the release of the substrate protein, thus completing the reaction cycle. Several rounds of ATP-dependent interactions between DnaJ, DnaK and GrpE are required for fully efficient folding. Also involved, together with DnaK and GrpE, in the DNA replication of plasmids through activation of initiation proteins. In Photorhabdus laumondii subsp. laumondii (strain DSM 15139 / CIP 105565 / TT01) (Photorhabdus luminescens subsp. laumondii), this protein is Chaperone protein DnaJ.